We begin with the raw amino-acid sequence, 348 residues long: Dihydroorotate dehydrogenase (quinone) (348 aa).

FMN-binding positions include 65-69 (AGLDK) and Thr89. Substrate is bound at residue Lys69. Residue 114–118 (NRLGF) participates in substrate binding. FMN contacts are provided by Asn147 and Asn180. Asn180 contributes to the substrate binding site. The active-site Nucleophile is Ser183. Residue Asn185 participates in substrate binding. 2 residues coordinate FMN: Lys225 and Thr253. 254–255 (NT) is a substrate binding site. Residues Gly276, Gly305, and 326 to 327 (YS) contribute to the FMN site.

The protein belongs to the dihydroorotate dehydrogenase family. Type 2 subfamily. Monomer. FMN is required as a cofactor.

It is found in the cell membrane. The enzyme catalyses (S)-dihydroorotate + a quinone = orotate + a quinol. It participates in pyrimidine metabolism; UMP biosynthesis via de novo pathway; orotate from (S)-dihydroorotate (quinone route): step 1/1. Its function is as follows. Catalyzes the conversion of dihydroorotate to orotate with quinone as electron acceptor. The chain is Dihydroorotate dehydrogenase (quinone) from Delftia acidovorans (strain DSM 14801 / SPH-1).